The following is a 430-amino-acid chain: Gamma-glutamyl phosphate reductase (430 aa).

It belongs to the gamma-glutamyl phosphate reductase family.

It is found in the cytoplasm. It catalyses the reaction L-glutamate 5-semialdehyde + phosphate + NADP(+) = L-glutamyl 5-phosphate + NADPH + H(+). Its pathway is amino-acid biosynthesis; L-proline biosynthesis; L-glutamate 5-semialdehyde from L-glutamate: step 2/2. Catalyzes the NADPH-dependent reduction of L-glutamate 5-phosphate into L-glutamate 5-semialdehyde and phosphate. The product spontaneously undergoes cyclization to form 1-pyrroline-5-carboxylate. This is Gamma-glutamyl phosphate reductase from Psychrobacter arcticus (strain DSM 17307 / VKM B-2377 / 273-4).